We begin with the raw amino-acid sequence, 93 residues long: Em protein H2 (93 aa).

The interval 1 to 93 is disordered; the sequence is MASGQQERSQ…IDESKFKTKS (93 aa). 3 stretches are compositionally biased toward basic and acidic residues: residues 9-19, 31-52, and 73-93; these read SQLDRKAREGE, LEAH…REQM, and GGER…KTKS.

This sequence belongs to the small hydrophilic plant seed protein family.

In terms of biological role, it is thought to provide protection for the cytoplasm during the desiccation stage of embryo development. This Triticum aestivum (Wheat) protein is Em protein H2 (EMH2).